The following is a 226-amino-acid chain: Cytidylate kinase (226 aa).

10 to 18 (GPASSGKST) serves as a coordination point for ATP.

This sequence belongs to the cytidylate kinase family. Type 1 subfamily.

The protein localises to the cytoplasm. The enzyme catalyses CMP + ATP = CDP + ADP. The catalysed reaction is dCMP + ATP = dCDP + ADP. The sequence is that of Cytidylate kinase from Enterococcus faecalis (strain ATCC 700802 / V583).